We begin with the raw amino-acid sequence, 563 residues long: Pentatricopeptide repeat-containing protein At4g39620, chloroplastic (563 aa).

Residues 1 to 47 constitute a chloroplast transit peptide; that stretch reads MDYLLTSPSSLRFSDFISSIPKETDHKWLRFSVNLGDARRSTRTRIT. PPR repeat units lie at residues 132-166, 167-197, 207-241, 242-276, 277-311, 312-346, 347-381, 382-416, and 417-451; these read DNGVYSKLISVMGKKGQTRMAMWLFSEMKNSGCRP, DASVYNALITAHLHTRDKAKALEKVRGYLDK, NVVTYNILLRAFAQSGKVDQVNALFKDLDMSPVSP, DVYTFNGVMDAYGKNGMIKEMEAVLTRMRSNECKP, DIITFNVLIDSYGKKQEFEKMEQTFKSLMRSKEKP, TLPTFNSMIINYGKARMIDKAEWVFKKMNDMNYIP, SFITYECMIMMYGYCGSVSRAREIFEEVGESDRVL, KASTLNAMLEVYCRNGLYIEADKLFHNASAFRVHP, and DASTYKFLYKAYTKADMKEQVQILMKKMEKDGIVP. 2 disordered regions span residues 468-501 and 520-551; these read PGSGSENRKSTRSSRSRDSPKGRGGNQLTEFQDK and NLSGHDKGSRDESRKPSQEKQPLFASDQNNMM. Over residues 520 to 537 the composition is skewed to basic and acidic residues; it reads NLSGHDKGSRDESRKPSQ.

Belongs to the PPR family. P subfamily.

Its subcellular location is the plastid. The protein localises to the chloroplast. Functionally, essential for embryo development. The polypeptide is Pentatricopeptide repeat-containing protein At4g39620, chloroplastic (Arabidopsis thaliana (Mouse-ear cress)).